Reading from the N-terminus, the 51-residue chain is UPF0391 membrane protein PsycPRwf_2202 (51 aa).

A run of 2 helical transmembrane segments spans residues 6–26 and 27–47; these read IIFA…VAGL and SQNF…IGFI.

This sequence belongs to the UPF0391 family.

The protein localises to the cell membrane. The protein is UPF0391 membrane protein PsycPRwf_2202 of Psychrobacter sp. (strain PRwf-1).